We begin with the raw amino-acid sequence, 572 residues long: Hsp70-Hsp90 organizing protein 1 (572 aa).

TPR repeat units follow at residues 2–35 (AEEAKAKGNAAFSSGDFTTAINHFTEAIALAPTN), 37–69 (VLFSNRSAAHASLHQYAEALSDAKETIKLKPYW), and 70–103 (PKGYSRLGAAHLGLNQFELAVTAYKKGLDVDPTN). One can recognise an STI1 1 domain in the interval 133–172 (GPEMWTKLTSDPSTRGFLQQPDFVNMMQEIQKNPSSLNLY). Residue Ser167 is modified to Phosphoserine. The segment at 189 to 248 (KFRPPPPQGDEAEVPESDMGQSSSNEPEVEKKREPEPEPEPEVTEEKEKKERKEKAKKEK) is disordered. Residues 232–248 (TEEKEKKERKEKAKKEK) are compositionally biased toward basic and acidic residues. The Bipartite nuclear localization signal signature appears at 241–258 (KEKAKKEKELGNAAYKKK). TPR repeat units follow at residues 244–277 (AKKEKELGNAAYKKKDFETAIQHYSTAIEIDDED), 279–311 (SYLTNRAAVYLEMGKYNECIEDCNKAVERGREL), 319–356 (ARALTRKGTALTKMAKCSKDYEPAIEAFQKALTEHRNP), 358–382 (TLKRLNDAERAKKEWEQKQYFDPKL), 383–416 (GDEEREKGNDFFKEQKYPEAIKHYTEAIKRNPND), 418–450 (KAYSNRAASYTKLGAMPEGLKDAEKCIELDPTF), and 451–484 (SKGYSRKAAVQFFLKEYDNAMETYQAGLEHDPSN). The region spanning 521 to 560 (DPEIQNILTDPVMRQVLSDLQENPSAAQKHMQNPMVMNKI) is the STI1 2 domain.

Co-chaperone that forms a complex with HSP70 and HSP90 and preproteins (e.g. chloroplast preproteins). In terms of processing, phosphorylated. Post-translationally, acetylated.

The protein localises to the cytoplasm. The protein resides in the nucleus. Its function is as follows. Mediates the association of the molecular chaperones HSP70 and HSP90. Mediates nuclear encoded chloroplast preproteins binding to HSP90 prior to chloroplastic sorting. This is Hsp70-Hsp90 organizing protein 1 (HOP1) from Arabidopsis thaliana (Mouse-ear cress).